We begin with the raw amino-acid sequence, 185 residues long: UPF0397 protein LBA0922 (185 aa).

The next 5 helical transmembrane spans lie at 11–31, 45–65, 72–92, 111–131, and 146–166; these read VVAIGIGSAIYVILARFTSIP, FLAFFASIYGATVGFSVGFIG, IMYGQTWWSWVLATGILGWII, IILFNIVQIIANILAWIVVAP, and FVQGISATISNGISILIIGTI.

The protein belongs to the UPF0397 family.

It localises to the cell membrane. This Lactobacillus acidophilus (strain ATCC 700396 / NCK56 / N2 / NCFM) protein is UPF0397 protein LBA0922.